The chain runs to 306 residues: Putative HTH-type transcriptional regulatory protein Mhun_2548 (306 aa).

Residues 132-189 form the HTH cro/C1-type domain; the sequence is LRELRETRSLSLGDLGQILGVSRRTVAKYEAGMGTTIEIALRIEETFDSGVIEPIDLI. Positions 143–162 form a DNA-binding region, H-T-H motif; it reads LGDLGQILGVSRRTVAKYEA.

The chain is Putative HTH-type transcriptional regulatory protein Mhun_2548 from Methanospirillum hungatei JF-1 (strain ATCC 27890 / DSM 864 / NBRC 100397 / JF-1).